The chain runs to 163 residues: Phosphopantetheine adenylyltransferase (163 aa).

Ser-10 serves as a coordination point for substrate. ATP contacts are provided by residues 10-11 and His-18; that span reads SF. Substrate-binding residues include Lys-42, Leu-74, and Arg-88. Residues 89–91, Glu-99, and 124–130 contribute to the ATP site; these read GLR and YSFLSSS.

The protein belongs to the bacterial CoaD family. Homohexamer. Requires Mg(2+) as cofactor.

Its subcellular location is the cytoplasm. It catalyses the reaction (R)-4'-phosphopantetheine + ATP + H(+) = 3'-dephospho-CoA + diphosphate. The protein operates within cofactor biosynthesis; coenzyme A biosynthesis; CoA from (R)-pantothenate: step 4/5. Its function is as follows. Reversibly transfers an adenylyl group from ATP to 4'-phosphopantetheine, yielding dephospho-CoA (dPCoA) and pyrophosphate. The chain is Phosphopantetheine adenylyltransferase from Bacillus anthracis (strain A0248).